A 64-amino-acid chain; its full sequence is Large ribosomal subunit protein bL28 (64 aa).

This sequence belongs to the bacterial ribosomal protein bL28 family.

The chain is Large ribosomal subunit protein bL28 from Bifidobacterium longum (strain NCC 2705).